Consider the following 540-residue polypeptide: Beta-secretase (540 aa).

The first 31 residues, 1–31 (MHFSLPTSRIVVVVPAAAICIVCVLIETCTA), serve as a signal peptide directing secretion. The 355-residue stretch at 81–435 (YYIEVDIGTP…DRENKRVGFA (355 aa)) folds into the Peptidase A1 domain. Active-site residues include D99 and D302. Intrachain disulfides connect C222–C439, C291–C469, and C345–C397. Residues 483 to 503 (ITAYVLAAICLVCLIPVIVFA) form a helical membrane-spanning segment. At 504 to 540 (LTHQINKRCKGRRGRGVVNHHRLDQEGLAENEPNSDP) the chain is on the cytoplasmic side.

The protein belongs to the peptidase A1 family.

The protein localises to the membrane. This is Beta-secretase from Strongylocentrotus purpuratus (Purple sea urchin).